The chain runs to 195 residues: 2-cysteine peroxiredoxin, chloroplastic (195 aa).

The region spanning 3 to 161 (IRVGQKAPDF…ALRTLQAIQY (159 aa)) is the Thioredoxin domain. Cys-49 serves as the catalytic Cysteine sulfenic acid (-SOH) intermediate.

This sequence belongs to the peroxiredoxin family. AhpC/Prx1 subfamily. As to quaternary structure, homodimer; disulfide-linked, upon oxidation.

It is found in the plastid. Its subcellular location is the chloroplast. The enzyme catalyses a hydroperoxide + [thioredoxin]-dithiol = an alcohol + [thioredoxin]-disulfide + H2O. In terms of biological role, thiol-specific peroxidase that catalyzes the reduction of hydrogen peroxide and organic hydroperoxides to water and alcohols, respectively. Plays a role in cell protection against oxidative stress by detoxifying peroxides. The sequence is that of 2-cysteine peroxiredoxin, chloroplastic from Chattonella marina var. antiqua (Red tide flagellate).